Reading from the N-terminus, the 337-residue chain is Fructose-1,6-bisphosphatase class 1 (337 aa).

The Mg(2+) site is built by E94, D116, L118, and D119. Residues 119-122 (DGSS), N210, and K276 each bind substrate. E282 serves as a coordination point for Mg(2+).

Belongs to the FBPase class 1 family. In terms of assembly, homotetramer. Mg(2+) serves as cofactor.

The protein localises to the cytoplasm. The catalysed reaction is beta-D-fructose 1,6-bisphosphate + H2O = beta-D-fructose 6-phosphate + phosphate. It functions in the pathway carbohydrate biosynthesis; gluconeogenesis. The chain is Fructose-1,6-bisphosphatase class 1 from Burkholderia cenocepacia (strain HI2424).